The chain runs to 244 residues: NAD(P)H-hydrate epimerase (244 aa).

The YjeF N-terminal domain occupies Ile35–Arg240. Asn82–Asp86 contacts (6S)-NADPHX. 2 residues coordinate K(+): Asn83 and Asp150. (6S)-NADPHX contacts are provided by residues Gly154 to Pro160, Tyr165, and Asp183. Thr186 contacts K(+).

It belongs to the NnrE/AIBP family. K(+) serves as cofactor.

The enzyme catalyses (6R)-NADHX = (6S)-NADHX. The catalysed reaction is (6R)-NADPHX = (6S)-NADPHX. Functionally, catalyzes the epimerization of the S- and R-forms of NAD(P)HX, a damaged form of NAD(P)H that is a result of enzymatic or heat-dependent hydration. This is a prerequisite for the S-specific NAD(P)H-hydrate dehydratase to allow the repair of both epimers of NAD(P)HX. In Rhodopirellula baltica (strain DSM 10527 / NCIMB 13988 / SH1), this protein is NAD(P)H-hydrate epimerase.